The chain runs to 301 residues: Helicase VP6-A (301 aa).

Disordered stretches follow at residues 1-99 (MIDW…TTGT) and 163-208 (RRKE…TSVG). 3 stretches are compositionally biased toward basic and acidic residues: residues 8–30 (ESGK…KDGE), 37–55 (GQKK…DRRV), and 67–81 (GFRE…RGDG). Lysine 82 provides a ligand contact to ATP. Basic and acidic residues-rich tracts occupy residues 163–177 (RRKE…VAEK) and 186–202 (VHGD…KTPE).

It belongs to the orbivirus VP6 family. In terms of assembly, homohexamer.

Its subcellular location is the virion. The catalysed reaction is ATP + H2O = ADP + phosphate + H(+). ATP dependent RNA helicase essential for RNA packaging and viral transcription. Possesses ss- and dsRNA-binding capacity. The chain is Helicase VP6-A (Segment-9) from Bluetongue virus 2 (isolate USA) (BTV 2).